Reading from the N-terminus, the 263-residue chain is Acyl-[acyl-carrier-protein]--UDP-N-acetylglucosamine O-acyltransferase (263 aa).

This sequence belongs to the transferase hexapeptide repeat family. LpxA subfamily. As to quaternary structure, homotrimer.

It is found in the cytoplasm. It carries out the reaction a (3R)-hydroxyacyl-[ACP] + UDP-N-acetyl-alpha-D-glucosamine = a UDP-3-O-[(3R)-3-hydroxyacyl]-N-acetyl-alpha-D-glucosamine + holo-[ACP]. It participates in glycolipid biosynthesis; lipid IV(A) biosynthesis; lipid IV(A) from (3R)-3-hydroxytetradecanoyl-[acyl-carrier-protein] and UDP-N-acetyl-alpha-D-glucosamine: step 1/6. Functionally, involved in the biosynthesis of lipid A, a phosphorylated glycolipid that anchors the lipopolysaccharide to the outer membrane of the cell. In Campylobacter jejuni (strain RM1221), this protein is Acyl-[acyl-carrier-protein]--UDP-N-acetylglucosamine O-acyltransferase.